Reading from the N-terminus, the 216-residue chain is MVAQITEGTAFDKHGRPFRRRNPRPAIVVVAFLVVVTCVMWTLALTRPPDVREAAVCNPPPQPAGSAPTNLGEQVSRTDMTDVAPAKLSDTKVHVLNASGRGGQAADIAGALQDLGFAQPTAANDPIYAGTRLDCQGQIRFGTAGQATAAALWLVAPCTELYHDSRADDSVDLALGTDFTTLAHNDDIDAVLANLRPGATEPSDPALLAKIHANSC.

Residues 25 to 45 (PAIVVVAFLVVVTCVMWTLAL) form a helical membrane-spanning segment.

Its subcellular location is the cell membrane. In terms of biological role, contributes to cell envelope integrity and virulence. The protein is Cell envelope integrity protein Cei of Mycobacterium tuberculosis (strain ATCC 25618 / H37Rv).